A 398-amino-acid polypeptide reads, in one-letter code: Minor cardiolipin synthase ClsB (398 aa).

A helical membrane pass occupies residues 3 to 23 (VFIVIMIIVVIFFALILLDIF). 2 PLD phosphodiesterase domains span residues 141-168 (MQKRNHRKITVIDGKIGYIGGFNIAEEY) and 311-338 (YQGFYHVKALIIDDHLSIIGTANFDKRS).

Belongs to the phospholipase D family. Cardiolipin synthase subfamily.

The protein localises to the cell membrane. Its function is as follows. Involved in the biosynthesis of cardiolipin. The chain is Minor cardiolipin synthase ClsB (clsB) from Bacillus subtilis (strain 168).